The chain runs to 197 residues: Imidazoleglycerol-phosphate dehydratase (197 aa).

The protein belongs to the imidazoleglycerol-phosphate dehydratase family.

Its subcellular location is the cytoplasm. The catalysed reaction is D-erythro-1-(imidazol-4-yl)glycerol 3-phosphate = 3-(imidazol-4-yl)-2-oxopropyl phosphate + H2O. It participates in amino-acid biosynthesis; L-histidine biosynthesis; L-histidine from 5-phospho-alpha-D-ribose 1-diphosphate: step 6/9. The polypeptide is Imidazoleglycerol-phosphate dehydratase (Pseudomonas fluorescens (strain SBW25)).